The primary structure comprises 430 residues: Isocitrate dehydrogenase [NADP], mitochondrial (430 aa).

The N-terminal 27 residues, 1–27 (MIRASAIQRTAMLLRQLRGFSTSATLA), are a transit peptide targeting the mitochondrion. NADP(+) contacts are provided by residues 101–103 (TIT) and Arg108. Thr103 contributes to the substrate binding site. Residues 120–126 (SPNGTIR), Arg135, and Arg158 contribute to the substrate site. Asp277 lines the Mn(2+) pocket. NADP(+) is bound at residue Lys285. Asp300 serves as a coordination point for Mn(2+). NADP(+) contacts are provided by residues 335 to 340 (GTVTRH) and Asn353.

The protein belongs to the isocitrate and isopropylmalate dehydrogenases family. In terms of assembly, homodimer. The cofactor is Mg(2+). It depends on Mn(2+) as a cofactor.

Its subcellular location is the mitochondrion. The catalysed reaction is D-threo-isocitrate + NADP(+) = 2-oxoglutarate + CO2 + NADPH. In terms of biological role, mitochondrial IDP1 may regulate flux through the tricarboxylic acid cycle and respiration. Its probably critical function is the production of NADPH. The protein is Isocitrate dehydrogenase [NADP], mitochondrial (IDP1) of Candida tropicalis (Yeast).